Consider the following 196-residue polypeptide: Imidazoleglycerol-phosphate dehydratase (196 aa).

Belongs to the imidazoleglycerol-phosphate dehydratase family.

Its subcellular location is the cytoplasm. The catalysed reaction is D-erythro-1-(imidazol-4-yl)glycerol 3-phosphate = 3-(imidazol-4-yl)-2-oxopropyl phosphate + H2O. Its pathway is amino-acid biosynthesis; L-histidine biosynthesis; L-histidine from 5-phospho-alpha-D-ribose 1-diphosphate: step 6/9. The chain is Imidazoleglycerol-phosphate dehydratase from Desulforamulus reducens (strain ATCC BAA-1160 / DSM 100696 / MI-1) (Desulfotomaculum reducens).